A 317-amino-acid polypeptide reads, in one-letter code: Porphobilinogen deaminase (317 aa).

An S-(dipyrrolylmethanemethyl)cysteine modification is found at Cys-245.

The protein belongs to the HMBS family. In terms of assembly, monomer. Requires dipyrromethane as cofactor.

It catalyses the reaction 4 porphobilinogen + H2O = hydroxymethylbilane + 4 NH4(+). The protein operates within porphyrin-containing compound metabolism; protoporphyrin-IX biosynthesis; coproporphyrinogen-III from 5-aminolevulinate: step 2/4. Its pathway is porphyrin-containing compound metabolism; chlorophyll biosynthesis. Functionally, tetrapolymerization of the monopyrrole PBG into the hydroxymethylbilane pre-uroporphyrinogen in several discrete steps. The polypeptide is Porphobilinogen deaminase (Synechococcus sp. (strain CC9605)).